A 243-amino-acid chain; its full sequence is MTQFSPLYEGKAKIIYATADPDVLLAEFKDDATAFNAQKRGSIQNKGVMNCAIASHLFQYLAAQGITNHFIAQVAPNKMHIRRVEIIPLEVVVRNQAAGSLCRQTGLPLGLALNPPLVEFYLKNDDLGDPLLTPDRLRLLQVATDEEVIQIRQMALAVNTHLSHFFAECGITLVDFKLEFGRRPTGEILLADEISPDSCRLWNRDESDPEKRILDKDRFRQDLGAIEEAYALVMQRVLAHSVS.

This sequence belongs to the SAICAR synthetase family.

It catalyses the reaction 5-amino-1-(5-phospho-D-ribosyl)imidazole-4-carboxylate + L-aspartate + ATP = (2S)-2-[5-amino-1-(5-phospho-beta-D-ribosyl)imidazole-4-carboxamido]succinate + ADP + phosphate + 2 H(+). The protein operates within purine metabolism; IMP biosynthesis via de novo pathway; 5-amino-1-(5-phospho-D-ribosyl)imidazole-4-carboxamide from 5-amino-1-(5-phospho-D-ribosyl)imidazole-4-carboxylate: step 1/2. This is Phosphoribosylaminoimidazole-succinocarboxamide synthase from Thermosynechococcus vestitus (strain NIES-2133 / IAM M-273 / BP-1).